The chain runs to 147 residues: Small ribosomal subunit protein uS12 (147 aa).

This sequence belongs to the universal ribosomal protein uS12 family. Part of the 30S ribosomal subunit.

Its function is as follows. With S4 and S5 plays an important role in translational accuracy. Located at the interface of the 30S and 50S subunits. The polypeptide is Small ribosomal subunit protein uS12 (Hyperthermus butylicus (strain DSM 5456 / JCM 9403 / PLM1-5)).